A 24-amino-acid polypeptide reads, in one-letter code: Chlorate reductase subunit beta (24 aa).

As to quaternary structure, heterotrimer of alpha, beta and gamma subunits. It depends on [3Fe-4S] cluster as a cofactor. [4Fe-4S] cluster serves as cofactor.

The protein localises to the cytoplasm. In terms of biological role, electron transfer subunit of the chlorate reductase. The sequence is that of Chlorate reductase subunit beta from Stutzerimonas chloritidismutans (Pseudomonas chloritidismutans).